Here is a 483-residue protein sequence, read N- to C-terminus: Lipoamide acyltransferase component of branched-chain alpha-keto acid dehydrogenase complex, mitochondrial (483 aa).

The transit peptide at 1-75 (MIARRIWRSH…AMATDSNSGL (75 aa)) directs the protein to the mitochondrion. The region spanning 76–150 (IDVPLAQTGE…KVGETLVRLA (75 aa)) is the Lipoyl-binding domain. K116 bears the N6-lipoyllysine mark. One can recognise a Peripheral subunit-binding (PSBD) domain in the interval 183-220 (LSTPAVRNLAKDLGIDINVITGTGKDGRVLKEDVLRFS). Residues H453 and D457 contribute to the active site.

The protein belongs to the 2-oxoacid dehydrogenase family. In terms of assembly, forms a 24-polypeptide structural core with octahedral symmetry. (R)-lipoate serves as cofactor. As to expression, expressed in the non-photosynthetic organs such as siliques, flowers and roots.

It is found in the mitochondrion matrix. The catalysed reaction is N(6)-[(R)-dihydrolipoyl]-L-lysyl-[protein] + 2-methylpropanoyl-CoA = N(6)-[(R)-S(8)-2-methylpropanoyldihydrolipoyl]-L-lysyl-[protein] + CoA. The branched-chain alpha-keto dehydrogenase complex catalyzes the overall conversion of alpha-keto acids to acyl-CoA and CO(2). It contains multiple copies of three enzymatic components: branched-chain alpha-keto acid decarboxylase (E1), lipoamide acyltransferase (E2) and lipoamide dehydrogenase (E3). Within this complex, the catalytic function of this enzyme is to accept, and to transfer to coenzyme A, acyl groups that are generated by the branched-chain alpha-keto acid decarboxylase component. Required during sugar starvation and acts under the control of a sugar-sensing mechanism involving Ser/Thr kinases and phosphatases. The polypeptide is Lipoamide acyltransferase component of branched-chain alpha-keto acid dehydrogenase complex, mitochondrial (BCE2) (Arabidopsis thaliana (Mouse-ear cress)).